The sequence spans 84 residues: UPF0298 protein NWMN_0985 (84 aa).

It belongs to the UPF0298 family.

It localises to the cytoplasm. The sequence is that of UPF0298 protein NWMN_0985 from Staphylococcus aureus (strain Newman).